Reading from the N-terminus, the 544-residue chain is Chaperonin GroEL 1 (544 aa).

Residues 30 to 33 (TLGP), lysine 51, 87 to 91 (DGTTT), glycine 415, and aspartate 494 contribute to the ATP site.

Belongs to the chaperonin (HSP60) family. As to quaternary structure, forms a cylinder of 14 subunits composed of two heptameric rings stacked back-to-back. Interacts with the co-chaperonin GroES.

It is found in the cytoplasm. The catalysed reaction is ATP + H2O + a folded polypeptide = ADP + phosphate + an unfolded polypeptide.. Functionally, together with its co-chaperonin GroES, plays an essential role in assisting protein folding. The GroEL-GroES system forms a nano-cage that allows encapsulation of the non-native substrate proteins and provides a physical environment optimized to promote and accelerate protein folding. In Syntrophus aciditrophicus (strain SB), this protein is Chaperonin GroEL 1.